Here is a 110-residue protein sequence, read N- to C-terminus: uncharacterized protein (110 aa).

The signal sequence occupies residues 1–26 (MIRNVLLAFMICSGMTLLGGCSSVMS). A disordered region spans residues 87–110 (RVEKSEANAQATNAVIPPARMPDN).

This sequence to E.coli YceK.

This is an uncharacterized protein from Escherichia coli (strain K12).